The primary structure comprises 391 residues: Phosphoglycerate kinase (391 aa).

Residues 21 to 23 (DMN), Arg-36, 59 to 62 (HLGR), Arg-113, and Arg-146 each bind substrate. ATP-binding positions include Lys-197, Glu-319, and 345–348 (GGDT).

Belongs to the phosphoglycerate kinase family. Monomer.

It localises to the cytoplasm. The enzyme catalyses (2R)-3-phosphoglycerate + ATP = (2R)-3-phospho-glyceroyl phosphate + ADP. Its pathway is carbohydrate degradation; glycolysis; pyruvate from D-glyceraldehyde 3-phosphate: step 2/5. This chain is Phosphoglycerate kinase, found in Chromobacterium violaceum (strain ATCC 12472 / DSM 30191 / JCM 1249 / CCUG 213 / NBRC 12614 / NCIMB 9131 / NCTC 9757 / MK).